An 859-amino-acid polypeptide reads, in one-letter code: Heat shock protein 105 kDa (859 aa).

The residue at position 2 (Ser-2) is an N-acetylserine. Position 471 is an N6-acetyllysine (Lys-471). 2 positions are modified to phosphoserine: Ser-509 and Ser-510. Disordered regions lie at residues 515-585 (MDCQ…PPEA) and 797-859 (CEPV…MDLD). Positions 533 to 555 (QQDNNEAGTQPQVQTDGHQTSQS) are enriched in polar residues. Ser-558 carries the phosphoserine modification. Residue Thr-562 is modified to Phosphothreonine. 2 stretches are compositionally biased toward basic and acidic residues: residues 564–585 (EENK…PPEA) and 806–815 (PKIESPKLER). Ser-810 carries the phosphoserine modification. Position 816 is a phosphothreonine (Thr-816). Positions 822-831 (TDKKEEDLDG) are enriched in basic and acidic residues. The span at 850–859 (EKSSINMDLD) shows a compositional bias: polar residues.

This sequence belongs to the heat shock protein 70 family. As to quaternary structure, interacts with HSPA8/HSC70. Interacts with HSPA1A (via NBD) and HSPA1B (via NBD). In terms of processing, phosphorylation on Ser-509 may be important for regulation of the HSPA8/HSC70 chaperone activity.

It is found in the cytoplasm. Its function is as follows. Acts as a nucleotide-exchange factor (NEF) for chaperone proteins HSPA1A and HSPA1B, promoting the release of ADP from HSPA1A/B thereby triggering substrate release. Prevents the aggregation of denatured proteins in cells under severe stress, on which the ATP levels decrease markedly. Inhibits HSPA8/HSC70 ATPase and chaperone activities. In Bos taurus (Bovine), this protein is Heat shock protein 105 kDa (HSPH1).